A 607-amino-acid chain; its full sequence is Vacuolar fusion protein MON1 homolog (607 aa).

Low complexity predominate over residues 1-14 (MATSDSRSSPSSSD). 2 disordered regions span residues 1 to 173 (MATS…DDAS) and 463 to 486 (PIDRRRRSSTTNQEQDSPGPDISV). The span at 21-55 (NPSSDPETNSERVQSQLESMNLSQPSEVSDGSHTE) shows a compositional bias: polar residues.

Belongs to the MON1/SAND family. In terms of assembly, interacts with CCZ1A, CCZ1B and RABF2B. Widely expressed at stable levels.

It is found in the endosome. The protein resides in the prevacuolar compartment. In terms of biological role, plays an important role in membrane trafficking through the secretory apparatus. In complex with CCZ1, acts as a guanine exchange factor (GEF) for RABG3F of the Rab7 protein family. Promotes the exchange of GDP to GTP, converting RABG3F from an inactive GDP-bound form into an active GTP-bound form. The RABG3F active form is involved in protein trafficking from prevacuolar compartments (PVCs) to vacuoles. May serve as a linker between Rab5 and Rab7 protein families in PVCs and mediate PVC maturation. This Arabidopsis thaliana (Mouse-ear cress) protein is Vacuolar fusion protein MON1 homolog.